We begin with the raw amino-acid sequence, 758 residues long: MDVNPTLLFLKVPAQNAISTTFPYTGDPPYSHGTGTGYTMDTVNRTHQYSEKGKWTTNTETGAPQLNPIDGPLPEDNEPSGYAQTDCVLEAMAFLEESHPGIFENSCLETMEVVQQTRVDKLTQGRQTYDWTLNRNQPAATALANTIEVFRSNGLTANDSGRLIDFLKDVMESMDKEEVEITTHFQRKRRVRDNITKKMVTQRTIGKKKQRLNKRSYLIRALTLNTMTKDAERGKLKRRAIATPGMQIRGFVYFVETLARSICEKLEQSGLPVGGNEKKAKLANVVRKMMTNSQDTELSFTITGDNTKWNENQNPRMFLAMITYITRNQPEWFRNILSIAPIMFSNKMARLGKGYMFESKSMKLRTQIPAEMLASIDLKYFNESTRKKIEKIRPLLIDGTASLSPGMMMGMFNMLSTVLGVSILNLGQKRYTKTTYWWDGLQSSDDFALIVNAPNHEGIQAGVDRFYRTCKLVGINMSKKKSYINRTGTFEFTSFFYRYGFVANFSMELPSFGVSGINESADMSIGVTVIKNNMINNDLGPATAQMALQLFIKDYRYTYRCHRGDTQIQTRRSFELKKLWEQTHSKAGLLVSDGGPNLYNIRNLHIPEVCLKWELMDEDYQGRLCNPLNPFVSHKEIESVNNAVVMPAHGPAKSMEYDAVATTHSWIPKRNRSILNTSQRGILEDEQMYQKCCNLFEKFFPSSSYRRPVGISSMVEAMVSRARIDARIDFESGRIKKEEFAEIMKICSTIEELRRQKQ.

The tract at residues 50-82 (SEKGKWTTNTETGAPQLNPIDGPLPEDNEPSGY) is disordered. Residues 55 to 64 (WTTNTETGAP) show a composition bias toward polar residues. 2 consecutive short sequence motifs (nuclear localization signal) follow at residues 187 to 195 (RKRRVRDNI) and 203 to 216 (RTIGKKKQRLNKRS). The segment at 249–256 (RGFVYFVE) is promoter-binding site. Residues 286–483 (VRKMMTNSQD…GINMSKKKSY (198 aa)) enclose the RdRp catalytic domain.

Belongs to the influenza viruses polymerase PB1 family. In terms of assembly, influenza RNA polymerase is composed of three subunits: PB1, PB2 and PA. Interacts (via N-terminus) with PA (via C-terminus). Interacts (via C-terminus) with PB2 (via N-terminus); this interaction is essential for transcription initiation. In terms of processing, phosphorylated by host PRKCA.

The protein localises to the host nucleus. The protein resides in the host cytoplasm. The enzyme catalyses RNA(n) + a ribonucleoside 5'-triphosphate = RNA(n+1) + diphosphate. Its function is as follows. RNA-dependent RNA polymerase which is responsible for replication and transcription of virus RNA segments. The transcription of viral mRNAs occurs by a unique mechanism called cap-snatching. 5' methylated caps of cellular mRNAs are cleaved after 10-13 nucleotides by PA. In turn, these short capped RNAs are used as primers by PB1 for transcription of viral mRNAs. During virus replication, PB1 initiates RNA synthesis and copy vRNA into complementary RNA (cRNA) which in turn serves as a template for the production of more vRNAs. The polypeptide is RNA-directed RNA polymerase catalytic subunit (Influenza A virus (strain A/Chicken/Scotland/1959 H5N1)).